Reading from the N-terminus, the 292-residue chain is Mitochondrial ornithine transporter 1 (292 aa).

Solcar repeat units lie at residues 11–97, 105–196, and 211–292; these read EGAI…CSKF, SPLG…VKKS, and SKIW…LSAL. The next 6 membrane-spanning stretches (helical) occupy residues 14-34, 69-89, 104-124, 171-187, 213-233, and 267-287; these read ILDIINGSIAGACGKVIEFPF, FFQGIASPLVGACLENATLFV, VSPLGQILISGGVAGSCASLV, GQSGTFIRESFGGVAWF, IWELLISGGSAGLAFNASIFP, and GLGITLFRAVPANAAVFYIFE.

This sequence belongs to the mitochondrial carrier (TC 2.A.29) family.

It is found in the mitochondrion inner membrane. Functionally, required for arginine biosynthesis. Transports ornithine synthesized from glutamate in the mitochondrial matrix to the cytosol, where it is converted to arginine. This is Mitochondrial ornithine transporter 1 (ORT1) from Saccharomyces cerevisiae (strain ATCC 204508 / S288c) (Baker's yeast).